We begin with the raw amino-acid sequence, 807 residues long: Leucine--tRNA ligase (807 aa).

The 'HIGH' region motif lies at 38 to 49 (PYPSGSGLHVGH). Residues 579–583 (KMSKS) carry the 'KMSKS' region motif. Residue lysine 582 coordinates ATP.

This sequence belongs to the class-I aminoacyl-tRNA synthetase family.

It localises to the cytoplasm. It catalyses the reaction tRNA(Leu) + L-leucine + ATP = L-leucyl-tRNA(Leu) + AMP + diphosphate. This is Leucine--tRNA ligase from Mycoplasmopsis pulmonis (strain UAB CTIP) (Mycoplasma pulmonis).